A 101-amino-acid chain; its full sequence is Aspartyl/glutamyl-tRNA(Asn/Gln) amidotransferase subunit C (101 aa).

Belongs to the GatC family. Heterotrimer of A, B and C subunits.

The catalysed reaction is L-glutamyl-tRNA(Gln) + L-glutamine + ATP + H2O = L-glutaminyl-tRNA(Gln) + L-glutamate + ADP + phosphate + H(+). The enzyme catalyses L-aspartyl-tRNA(Asn) + L-glutamine + ATP + H2O = L-asparaginyl-tRNA(Asn) + L-glutamate + ADP + phosphate + 2 H(+). In terms of biological role, allows the formation of correctly charged Asn-tRNA(Asn) or Gln-tRNA(Gln) through the transamidation of misacylated Asp-tRNA(Asn) or Glu-tRNA(Gln) in organisms which lack either or both of asparaginyl-tRNA or glutaminyl-tRNA synthetases. The reaction takes place in the presence of glutamine and ATP through an activated phospho-Asp-tRNA(Asn) or phospho-Glu-tRNA(Gln). The polypeptide is Aspartyl/glutamyl-tRNA(Asn/Gln) amidotransferase subunit C (Lactococcus lactis subsp. cremoris (strain SK11)).